A 648-amino-acid chain; its full sequence is Golgin subfamily A member 8G (648 aa).

Positions 1–11 (MWPQARLPPHP) are enriched in pro residues. Disordered regions lie at residues 1–84 (MWPQ…SATL) and 119–139 (NKQV…KQKA). A compositionally biased stretch (polar residues) spans 50–62 (TNGSIHETATSGG). 3 coiled-coil regions span residues 105 to 160 (VSQL…LNTD), 223 to 275 (LEQS…MSQE), and 318 to 424 (EVEL…QQKQ). Residues 121-139 (QVEHQLEEEKKANNEKQKA) show a composition bias toward basic and acidic residues. 4 disordered regions span residues 356–376 (LREQ…QEER), 434–461 (ALPG…SIPQ), 508–549 (PITK…GVAA), and 600–624 (PVQG…QDHQ). Basic and acidic residues predominate over residues 441 to 453 (GGGHLDSEGEEAP). Positions 521 to 534 (PGGGHHQAGPGQGG) are enriched in gly residues.

The protein belongs to the GOLGA8 family.

The sequence is that of Golgin subfamily A member 8G from Homo sapiens (Human).